A 34-amino-acid chain; its full sequence is uncharacterized protein (34 aa).

This is an uncharacterized protein from Treponema pallidum (strain Nichols).